Reading from the N-terminus, the 858-residue chain is Heat shock protein 105 kDa (858 aa).

Ser2 carries the post-translational modification N-acetylserine. The residue at position 471 (Lys471) is an N6-acetyllysine. 2 disordered regions span residues 500 to 584 (KVPT…PPEA) and 796 to 858 (CEPV…MDLD). A compositionally biased stretch (acidic residues) spans 504–514 (EENEMSSEADM). A phosphoserine mark is found at Ser509 and Ser510. Over residues 532 to 554 (QQDNSEAGTQPQVQTDAQQTSQS) the composition is skewed to polar residues. Ser557 carries the phosphoserine modification. Thr561 carries the phosphothreonine modification. 2 stretches are compositionally biased toward basic and acidic residues: residues 563–584 (EENK…PPEA) and 805–814 (PKIESPKLER). Ser809 carries the phosphoserine modification. Thr815 is modified (phosphothreonine). Basic and acidic residues predominate over residues 821-832 (IDKKEEDLEDKN). Residues 849–858 (EKNSVNMDLD) are compositionally biased toward polar residues.

The protein belongs to the heat shock protein 70 family. As to quaternary structure, interacts with HSPA8/HSC70. Interacts with HSPA1A (via NBD) and HSPA1B (via NBD). Phosphorylation on Ser-509 may be important for regulation of the HSPA8/HSC70 chaperone activity.

Its subcellular location is the cytoplasm. Its function is as follows. Acts as a nucleotide-exchange factor (NEF) for chaperone proteins HSPA1A and HSPA1B, promoting the release of ADP from HSPA1A/B thereby triggering substrate release. Prevents the aggregation of denatured proteins in cells under severe stress, on which the ATP levels decrease markedly. Inhibits HSPA8/HSC70 ATPase and chaperone activities. The sequence is that of Heat shock protein 105 kDa (HSPH1) from Pongo abelii (Sumatran orangutan).